Consider the following 235-residue polypeptide: Orotidine 5'-phosphate decarboxylase (235 aa).

Substrate-binding positions include aspartate 11, lysine 33, 60–69 (DLKFHDIPNT), threonine 119, arginine 180, glutamine 189, glycine 209, and arginine 210. Lysine 62 serves as the catalytic Proton donor.

Belongs to the OMP decarboxylase family. Type 1 subfamily. Homodimer.

It carries out the reaction orotidine 5'-phosphate + H(+) = UMP + CO2. It functions in the pathway pyrimidine metabolism; UMP biosynthesis via de novo pathway; UMP from orotate: step 2/2. Its function is as follows. Catalyzes the decarboxylation of orotidine 5'-monophosphate (OMP) to uridine 5'-monophosphate (UMP). This is Orotidine 5'-phosphate decarboxylase from Alkalilimnicola ehrlichii (strain ATCC BAA-1101 / DSM 17681 / MLHE-1).